The sequence spans 142 residues: MAKKVTGIIKLQVAAGAANPSPPVGPALGQKGVNIMEFCKAFNAKTGDMEKGSPVPVEITVYEDRSFTFETKTSPASYMLKKAAGIKSGSGRPNTEKVGKVTLAQLEEIAKAKEPDLTAADLEAAVRTIAGSARSMGLVVEG.

It belongs to the universal ribosomal protein uL11 family. As to quaternary structure, part of the ribosomal stalk of the 50S ribosomal subunit. Interacts with L10 and the large rRNA to form the base of the stalk. L10 forms an elongated spine to which L12 dimers bind in a sequential fashion forming a multimeric L10(L12)X complex. In terms of processing, one or more lysine residues are methylated.

Functionally, forms part of the ribosomal stalk which helps the ribosome interact with GTP-bound translation factors. The polypeptide is Large ribosomal subunit protein uL11 (Pseudoalteromonas atlantica (strain T6c / ATCC BAA-1087)).